Consider the following 265-residue polypeptide: Zinc import ATP-binding protein ZnuC (265 aa).

Residues 6–221 (IRLEQVAVTL…PAFVELFGKN (216 aa)) enclose the ABC transporter domain. 38–45 (GPNGAGKT) provides a ligand contact to ATP. Residues 245 to 265 (DAPATSSHTHTHVHGDHCKHG) form a disordered region.

The protein belongs to the ABC transporter superfamily. Zinc importer (TC 3.A.1.15.5) family. The complex is composed of two ATP-binding proteins (ZnuC), two transmembrane proteins (ZnuB) and a solute-binding protein (ZnuA).

The protein localises to the cell inner membrane. It carries out the reaction Zn(2+)(out) + ATP(in) + H2O(in) = Zn(2+)(in) + ADP(in) + phosphate(in) + H(+)(in). Its function is as follows. Part of the ABC transporter complex ZnuABC involved in zinc import. Responsible for energy coupling to the transport system. This Pseudomonas savastanoi pv. phaseolicola (strain 1448A / Race 6) (Pseudomonas syringae pv. phaseolicola (strain 1448A / Race 6)) protein is Zinc import ATP-binding protein ZnuC.